The sequence spans 282 residues: NADPH-dependent 7-cyano-7-deazaguanine reductase (282 aa).

88 to 90 (IES) is a substrate binding site. 90–91 (SK) serves as a coordination point for NADPH. The Thioimide intermediate role is filled by cysteine 190. Aspartate 197 acts as the Proton donor in catalysis. 229–230 (HE) provides a ligand contact to substrate. 258–259 (RG) contacts NADPH.

The protein belongs to the GTP cyclohydrolase I family. QueF type 2 subfamily. Homodimer.

Its subcellular location is the cytoplasm. It carries out the reaction 7-aminomethyl-7-carbaguanine + 2 NADP(+) = 7-cyano-7-deazaguanine + 2 NADPH + 3 H(+). Its pathway is tRNA modification; tRNA-queuosine biosynthesis. Its function is as follows. Catalyzes the NADPH-dependent reduction of 7-cyano-7-deazaguanine (preQ0) to 7-aminomethyl-7-deazaguanine (preQ1). The polypeptide is NADPH-dependent 7-cyano-7-deazaguanine reductase (Salmonella paratyphi A (strain ATCC 9150 / SARB42)).